The chain runs to 381 residues: Chorismate synthase (381 aa).

NADP(+)-binding residues include Arg-39 and Arg-45. Residues 127-129, 248-249, Gly-293, 308-312, and Arg-334 contribute to the FMN site; these read RAS, QS, and KPIPT.

Belongs to the chorismate synthase family. In terms of assembly, homotetramer. Requires FMNH2 as cofactor.

The enzyme catalyses 5-O-(1-carboxyvinyl)-3-phosphoshikimate = chorismate + phosphate. It participates in metabolic intermediate biosynthesis; chorismate biosynthesis; chorismate from D-erythrose 4-phosphate and phosphoenolpyruvate: step 7/7. Catalyzes the anti-1,4-elimination of the C-3 phosphate and the C-6 proR hydrogen from 5-enolpyruvylshikimate-3-phosphate (EPSP) to yield chorismate, which is the branch point compound that serves as the starting substrate for the three terminal pathways of aromatic amino acid biosynthesis. This reaction introduces a second double bond into the aromatic ring system. The polypeptide is Chorismate synthase (Caldicellulosiruptor saccharolyticus (strain ATCC 43494 / DSM 8903 / Tp8T 6331)).